Reading from the N-terminus, the 492-residue chain is Fibroblast growth factor receptor substrate 3 (492 aa).

A lipid anchor (N-myristoyl glycine) is attached at G2. Residues 13–115 (VPHNHPTKFK…QCNSINVTEE (103 aa)) form the IRS-type PTB domain. Disordered stretches follow at residues 122–230 (SSHP…SDQR), 328–414 (LPPV…PPRQ), 426–454 (GTARPKGPQNPSVSGAPGPTPHPVRSSDS), and 469–492 (LQRALPRDDGAVRKTRHNSTDLPL). Positions 371 to 382 (QKPTSTRASARS) are enriched in polar residues.

Binds NGFR, GRB2, PTPN11 and ERK2. Binds FGFR1 and NTRK1. Phosphorylated on tyrosine residues upon stimulation by BFGF or NGFB. Phosphorylated by ULK2 in vitro.

Its subcellular location is the membrane. Its function is as follows. Adapter protein that links FGF and NGF receptors to downstream signaling pathways. Involved in the activation of MAP kinases. Down-regulates ERK2 signaling by interfering with the phosphorylation and nuclear translocation of ERK2. The sequence is that of Fibroblast growth factor receptor substrate 3 (Frs3) from Mus musculus (Mouse).